A 130-amino-acid chain; its full sequence is Holo-[acyl-carrier-protein] synthase (130 aa).

Mg(2+)-binding residues include aspartate 8 and glutamate 62.

Belongs to the P-Pant transferase superfamily. AcpS family. The cofactor is Mg(2+).

It is found in the cytoplasm. The enzyme catalyses apo-[ACP] + CoA = holo-[ACP] + adenosine 3',5'-bisphosphate + H(+). Its function is as follows. Transfers the 4'-phosphopantetheine moiety from coenzyme A to a Ser of acyl-carrier-protein. The polypeptide is Holo-[acyl-carrier-protein] synthase (Acidovorax ebreus (strain TPSY) (Diaphorobacter sp. (strain TPSY))).